The chain runs to 308 residues: Pseudouridine-5'-phosphate glycosidase (308 aa).

The active-site Proton donor is the glutamate 25. Residues lysine 86 and valine 106 each coordinate substrate. Aspartate 142 lines the Mn(2+) pocket. 144-146 (SAD) serves as a coordination point for substrate. The active-site Nucleophile is lysine 163.

This sequence belongs to the pseudouridine-5'-phosphate glycosidase family. In terms of assembly, homotrimer. The cofactor is Mn(2+).

The catalysed reaction is D-ribose 5-phosphate + uracil = psi-UMP + H2O. Functionally, catalyzes the reversible cleavage of pseudouridine 5'-phosphate (PsiMP) to ribose 5-phosphate and uracil. Functions biologically in the cleavage direction, as part of a pseudouridine degradation pathway. This is Pseudouridine-5'-phosphate glycosidase from Symbiobacterium thermophilum (strain DSM 24528 / JCM 14929 / IAM 14863 / T).